A 475-amino-acid polypeptide reads, in one-letter code: Rho GTPase-activating protein 15 (475 aa).

Over residues 1 to 22 the composition is skewed to polar residues; it reads MQKSTNSDTSVETLNSTRQGTG. Positions 1-23 are disordered; it reads MQKSTNSDTSVETLNSTRQGTGA. Residues serine 43, serine 103, serine 196, serine 199, and serine 243 each carry the phosphoserine modification. One can recognise a PH domain in the interval 79–189; that stretch reads MVEKEGYLQK…WFHAIKNAID (111 aa). The Rho-GAP domain occupies 281–470; sequence SHLHKVCERE…LMLSEYSKIF (190 aa).

As to expression, expressed in lung, liver and lymphoid cells.

The protein resides in the cytoplasm. It is found in the membrane. Functionally, GTPase activator for the Rho-type GTPases by converting them to an inactive GDP-bound state. Has activity toward RAC1. Overexpression results in an increase in actin stress fibers and cell contraction. This chain is Rho GTPase-activating protein 15 (ARHGAP15), found in Homo sapiens (Human).